The following is a 424-amino-acid chain: Imidazolonepropionase (424 aa).

Fe(3+)-binding residues include histidine 84 and histidine 86. Histidine 84 and histidine 86 together coordinate Zn(2+). 3 residues coordinate 4-imidazolone-5-propanoate: arginine 93, tyrosine 156, and histidine 189. Tyrosine 156 lines the N-formimidoyl-L-glutamate pocket. A Fe(3+)-binding site is contributed by histidine 254. Histidine 254 serves as a coordination point for Zn(2+). Glutamate 257 is a 4-imidazolone-5-propanoate binding site. Aspartate 328 is a binding site for Fe(3+). A Zn(2+)-binding site is contributed by aspartate 328. Asparagine 330 and glycine 332 together coordinate N-formimidoyl-L-glutamate. Serine 333 is a binding site for 4-imidazolone-5-propanoate.

This sequence belongs to the metallo-dependent hydrolases superfamily. HutI family. Zn(2+) is required as a cofactor. The cofactor is Fe(3+).

It localises to the cytoplasm. The catalysed reaction is 4-imidazolone-5-propanoate + H2O = N-formimidoyl-L-glutamate. It participates in amino-acid degradation; L-histidine degradation into L-glutamate; N-formimidoyl-L-glutamate from L-histidine: step 3/3. Functionally, catalyzes the hydrolytic cleavage of the carbon-nitrogen bond in imidazolone-5-propanoate to yield N-formimidoyl-L-glutamate. It is the third step in the universal histidine degradation pathway. This chain is Imidazolonepropionase, found in Geobacillus sp. (strain WCH70).